Here is a 114-residue protein sequence, read N- to C-terminus: Iron-sulfur cluster insertion protein ErpA (114 aa).

Positions 42, 106, and 108 each coordinate iron-sulfur cluster.

Belongs to the HesB/IscA family. In terms of assembly, homodimer. Iron-sulfur cluster serves as cofactor.

Required for insertion of 4Fe-4S clusters for at least IspG. The sequence is that of Iron-sulfur cluster insertion protein ErpA from Sodalis glossinidius (strain morsitans).